The primary structure comprises 348 residues: L-threonine 3-dehydrogenase (348 aa).

A Zn(2+)-binding site is contributed by cysteine 42. Residues threonine 44 and histidine 47 each act as charge relay system in the active site. Residues histidine 67, glutamate 68, cysteine 97, cysteine 100, cysteine 103, and cysteine 111 each contribute to the Zn(2+) site. NAD(+) contacts are provided by residues leucine 179, glutamate 199, arginine 204, 266–268, and 291–292; these read LGL and IT.

It belongs to the zinc-containing alcohol dehydrogenase family. Homodimer. Homotetramer; dimer of dimers. Zn(2+) is required as a cofactor.

It localises to the cytoplasm. The enzyme catalyses L-threonine + NAD(+) = (2S)-2-amino-3-oxobutanoate + NADH + H(+). It functions in the pathway amino-acid degradation; L-threonine degradation via oxydo-reductase pathway; glycine from L-threonine: step 1/2. With respect to regulation, is totally inhibited by EDTA in vitro. In terms of biological role, catalyzes the NAD(+)-dependent oxidation of L-threonine to 2-amino-3-ketobutyrate. Is much less efficient when using NADP(+) instead of NAD(+). To a lesser extent, also catalyzes the oxidation of L-serine and DL-threo-3-phenylserine, but not that of L-allo-threonine, D-threonine and D-allo-threonine and many other L-amino acids. This Pyrococcus horikoshii (strain ATCC 700860 / DSM 12428 / JCM 9974 / NBRC 100139 / OT-3) protein is L-threonine 3-dehydrogenase.